The primary structure comprises 908 residues: Metabotropic glutamate receptor 8 (908 aa).

An N-terminal signal peptide occupies residues 1 to 33 (MVCEGKRLASCPCFFLLTAKFYWILTMMQRTHS). Residues 34 to 583 (QEYAHSIRVD…IIKLEWHSPW (550 aa)) lie on the Extracellular side of the membrane. An intrachain disulfide couples C64 to C106. N95 carries N-linked (GlcNAc...) asparagine glycosylation. L-glutamate is bound by residues S156, 177-179 (AST), and Y227. 7 disulfides stabilise this stretch: C246–C534, C369–C384, C424–C431, C516–C535, C520–C538, C541–C553, and C556–C569. N298 carries N-linked (GlcNAc...) asparagine glycosylation. L-glutamate is bound at residue D309. K401 is an L-glutamate binding site. Residues N452 and N480 are each glycosylated (N-linked (GlcNAc...) asparagine). Residue N565 is glycosylated (N-linked (GlcNAc...) asparagine). The chain crosses the membrane as a helical span at residues 584–608 (AVVPVFIAILGIIATTFVIVTFVRY). The Cytoplasmic segment spans residues 609-620 (NDTPIVRASGRE). Residues 621 to 641 (LSYVLLTGIFLCYSITFLMIA) traverse the membrane as a helical segment. At 642–647 (APDTII) the chain is on the extracellular side. A helical membrane pass occupies residues 648 to 668 (CSFRRIFLGLGMCFSYAALLT). Residues 669-695 (KTNRIHRIFEQGKKSVTAPKFISPASQ) lie on the Cytoplasmic side of the membrane. Residues 696–716 (LVITFSLISVQLLGVFVWFVV) traverse the membrane as a helical segment. Topologically, residues 717 to 746 (DPPHTIIDYGEQRTLDPENARGVLKCDISD) are extracellular. A helical membrane pass occupies residues 747–768 (LSLICSLGYSILLMVTCTVYAI). Residues 769–781 (KTRGVPETFNEAK) are Cytoplasmic-facing. Residues 782 to 803 (PIGFTMYTTCIIWLAFIPIFFG) form a helical membrane-spanning segment. Residues 804–818 (TAQSAEKMYIQTTTL) lie on the Extracellular side of the membrane. Residues 819–843 (TVSMSLSASVSLGMLYMPKVYIIIF) traverse the membrane as a helical segment. Over 844 to 908 (HPEQNVQKRK…TYISYSNHSI (65 aa)) the chain is Cytoplasmic. K882 is covalently cross-linked (Glycyl lysine isopeptide (Lys-Gly) (interchain with G-Cter in SUMO1)).

The protein belongs to the G-protein coupled receptor 3 family. As to quaternary structure, interacts with PICK1. In terms of tissue distribution, prominent expression in olfactory bulb, pontine gray, lateral reticular nucleus of the thalamus, and piriform cortex. Less abundant expression incerebral cortex, hippocampus, cerebellum, and mammillary body.

Its subcellular location is the cell membrane. Functionally, G-protein coupled receptor for glutamate. Ligand binding causes a conformation change that triggers signaling via guanine nucleotide-binding proteins (G proteins) and modulates the activity of down-stream effectors. Signaling inhibits adenylate cyclase activity. This Rattus norvegicus (Rat) protein is Metabotropic glutamate receptor 8 (Grm8).